The sequence spans 520 residues: Amine oxidase [flavin-containing] B (520 aa).

The residue at position 2 (Ser2) is an N-acetylserine. Topologically, residues 2–489 are cytoplasmic; sequence SNKCDVVVVG…TFLERHLPSV (488 aa). Lys52 bears the N6-acetyllysine mark. Residue Cys397 is modified to S-8alpha-FAD cysteine. The chain crosses the membrane as a helical; Anchor for type IV membrane protein span at residues 490 to 516; the sequence is PGLLRLIGLTTIFSATALGFLAHKRGL. At 517–520 the chain is on the mitochondrial intermembrane side; it reads LVRV.

In terms of assembly, monomer, homo- or heterodimer (containing two subunits of similar size). Each subunit contains a covalently bound flavin. Enzymatically active as monomer. FAD is required as a cofactor.

Its subcellular location is the mitochondrion outer membrane. The catalysed reaction is a secondary aliphatic amine + O2 + H2O = a primary amine + an aldehyde + H2O2. The enzyme catalyses (R)-adrenaline + O2 + H2O = (R)-3,4-dihydroxymandelaldehyde + methylamine + H2O2. It catalyses the reaction a primary methyl amine + O2 + H2O = an aldehyde + H2O2 + NH4(+). It carries out the reaction benzylamine + O2 + H2O = benzaldehyde + H2O2 + NH4(+). The catalysed reaction is dopamine + O2 + H2O = 3,4-dihydroxyphenylacetaldehyde + H2O2 + NH4(+). The enzyme catalyses tyramine + O2 + H2O = (4-hydroxyphenyl)acetaldehyde + H2O2 + NH4(+). It catalyses the reaction (R)-noradrenaline + O2 + H2O = (R)-3,4-dihydroxymandelaldehyde + H2O2 + NH4(+). It carries out the reaction 2-phenylethylamine + O2 + H2O = 2-phenylacetaldehyde + H2O2 + NH4(+). The catalysed reaction is N-acetylputrescine + O2 + H2O = 4-acetamidobutanal + H2O2 + NH4(+). Its activity is regulated as follows. Inhibited by deprenyl. In terms of biological role, catalyzes the oxidative deamination of primary and some secondary amines such as neurotransmitters, and exogenous amines including the tertiary amine, neurotoxin 1-methyl-4-phenyl-1,2,3,6-tetrahydropyridine (MPTP), with concomitant reduction of oxygen to hydrogen peroxide and participates in the metabolism of neuroactive and vasoactive amines in the central nervous system and peripheral tissues. Preferentially degrades benzylamine and phenylethylamine. This is Amine oxidase [flavin-containing] B from Homo sapiens (Human).